The primary structure comprises 144 residues: Universal stress protein A (144 aa).

It belongs to the universal stress protein A family. In terms of assembly, homodimer.

It is found in the cytoplasm. Its function is as follows. Required for resistance to DNA-damaging agents. In Salmonella typhimurium (strain LT2 / SGSC1412 / ATCC 700720), this protein is Universal stress protein A (uspA).